A 93-amino-acid polypeptide reads, in one-letter code: uncharacterized protein (93 aa).

The region spanning 1–76 (MDSHTTEKRR…IQTIEPDESM (76 aa)) is the Sm domain.

Part of the core SMN complex at least composed of smn1, yip11/gem2, gem6, gem7 and gem8. Interacts with gem7; the interaction is direct.

The SMN complex catalyzes the assembly of small nuclear ribonucleoproteins (snRNPs), the building blocks of the spliceosome, and thereby plays an important role in the splicing of cellular pre-mRNAs. Most spliceosomal snRNPs contain a common set of Sm proteins smb1, smd1, smd2, smd3, sme1, smf1 and smg1 that assemble in a heptameric protein ring on the Sm site of the small nuclear RNA to form the core snRNP (Sm core). In the cytosol, the Sm proteins smd1, smd2, sme1, smf1 and smg1 (5Sm) are trapped in an inactive 6S pICln-Sm complex by the chaperone saf5. To complete assembly of core snRNPs, the SMN complex accepts 5Sm from saf5. Binding of snRNA inside 5Sm triggers eviction of the SMN complex, thereby allowing binding of smd3 and smb1 to complete assembly of the core snRNP. This is an uncharacterized protein from Schizosaccharomyces pombe (strain 972 / ATCC 24843) (Fission yeast).